The sequence spans 353 residues: Dihydroorotate dehydrogenase (quinone) (353 aa).

FMN-binding positions include Ala-66–Lys-70 and Thr-90. Lys-70 serves as a coordination point for substrate. Residue Asn-115–Phe-119 coordinates substrate. Asn-143 and Asn-176 together coordinate FMN. Asn-176 lines the substrate pocket. Ser-179 acts as the Nucleophile in catalysis. Residue Asn-181 coordinates substrate. FMN contacts are provided by Lys-212 and Thr-240. Substrate is bound at residue Asn-241–Thr-242. Residues Gly-264, Gly-293, and Tyr-314 to Thr-315 contribute to the FMN site.

The protein belongs to the dihydroorotate dehydrogenase family. Type 2 subfamily. Monomer. The cofactor is FMN.

It localises to the cell membrane. It catalyses the reaction (S)-dihydroorotate + a quinone = orotate + a quinol. Its pathway is pyrimidine metabolism; UMP biosynthesis via de novo pathway; orotate from (S)-dihydroorotate (quinone route): step 1/1. In terms of biological role, catalyzes the conversion of dihydroorotate to orotate with quinone as electron acceptor. The sequence is that of Dihydroorotate dehydrogenase (quinone) from Mycolicibacterium gilvum (strain PYR-GCK) (Mycobacterium gilvum (strain PYR-GCK)).